The following is a 498-amino-acid chain: Calcium-dependent protein kinase 22 (498 aa).

A lipid anchor (N-myristoyl glycine) is attached at Gly2. Residues 36-305 (YSFGDELGKG…AADVLEHPWM (270 aa)) form the Protein kinase domain. ATP is bound by residues 42–50 (LGKGNFGTT) and Lys65. The active-site Proton acceptor is the Asp164. A Phosphoserine modification is found at Ser204. Residues 309–339 (APDKPIDNVVLSRMKQFRAMNKLKKLALKVI) are autoinhibitory domain. EF-hand domains follow at residues 346–381 (EEIK…HGSK), 382–417 (LSET…RHRL), 418–453 (ERDE…HGMG), and 454–488 (DEAN…GILQ). Positions 359, 361, 363, 365, 370, 395, 397, 399, 401, 406, 431, 433, 435, 437, 442, 466, 468, 470, 472, and 477 each coordinate Ca(2+).

Belongs to the protein kinase superfamily. Ser/Thr protein kinase family. CDPK subfamily.

Its subcellular location is the membrane. The catalysed reaction is L-seryl-[protein] + ATP = O-phospho-L-seryl-[protein] + ADP + H(+). The enzyme catalyses L-threonyl-[protein] + ATP = O-phospho-L-threonyl-[protein] + ADP + H(+). With respect to regulation, activated by calcium. Autophosphorylation may play an important role in the regulation of the kinase activity. May play a role in signal transduction pathways that involve calcium as a second messenger. The sequence is that of Calcium-dependent protein kinase 22 (CPK22) from Arabidopsis thaliana (Mouse-ear cress).